A 207-amino-acid chain; its full sequence is Small ribosomal subunit protein uS4c (207 aa).

In terms of domain architecture, S4 RNA-binding spans methionine 92–lysine 153.

It belongs to the universal ribosomal protein uS4 family. Part of the 30S ribosomal subunit. Contacts protein S5. The interaction surface between S4 and S5 is involved in control of translational fidelity.

The protein localises to the plastid. It is found in the chloroplast. In terms of biological role, one of the primary rRNA binding proteins, it binds directly to 16S rRNA where it nucleates assembly of the body of the 30S subunit. Functionally, with S5 and S12 plays an important role in translational accuracy. This is Small ribosomal subunit protein uS4c (rps4) from Equisetum bogotense (Horsetail).